The chain runs to 460 residues: Kynureninase (460 aa).

Pyridoxal 5'-phosphate is bound by residues Leu-116, Thr-117, 144–147, Ser-199, Asp-228, His-231, and Tyr-253; that span reads FPSD. Residue Lys-254 is modified to N6-(pyridoxal phosphate)lysine. Pyridoxal 5'-phosphate contacts are provided by Trp-288 and Asn-316.

This sequence belongs to the kynureninase family. In terms of assembly, homodimer. Pyridoxal 5'-phosphate serves as cofactor.

The protein resides in the cytoplasm. It carries out the reaction L-kynurenine + H2O = anthranilate + L-alanine + H(+). The catalysed reaction is 3-hydroxy-L-kynurenine + H2O = 3-hydroxyanthranilate + L-alanine + H(+). It participates in amino-acid degradation; L-kynurenine degradation; L-alanine and anthranilate from L-kynurenine: step 1/1. Its pathway is cofactor biosynthesis; NAD(+) biosynthesis; quinolinate from L-kynurenine: step 2/3. Its function is as follows. Catalyzes the cleavage of L-kynurenine (L-Kyn) and L-3-hydroxykynurenine (L-3OHKyn) into anthranilic acid (AA) and 3-hydroxyanthranilic acid (3-OHAA), respectively. This Debaryomyces hansenii (strain ATCC 36239 / CBS 767 / BCRC 21394 / JCM 1990 / NBRC 0083 / IGC 2968) (Yeast) protein is Kynureninase.